The following is a 373-amino-acid chain: NADPH-dependent 3-keto-steroid reductase Hsd3b5 (373 aa).

Residues 10–15 (GAGGFL), tyrosine 155, and lysine 159 contribute to the NADP(+) site. Lysine 159 (proton donor) is an active-site residue. Residues 288 to 308 (LSLLYWLAFLLETVSFLLRPV) form a helical membrane-spanning segment. Position 350 is an N6-acetyllysine (lysine 350).

The protein belongs to the 3-beta-HSD family. Expressed in the male liver, starting in late puberty.

It is found in the endoplasmic reticulum membrane. The protein localises to the mitochondrion membrane. It catalyses the reaction a 3beta-hydroxysteroid + NADP(+) = a 3-oxosteroid + NADPH + H(+). It carries out the reaction 5alpha-androstane-3beta,17beta-diol + NADP(+) = 17beta-hydroxy-5alpha-androstan-3-one + NADPH + H(+). Its pathway is steroid metabolism. Functionally, responsible for the reduction of the oxo group on the C-3 of 5alpha-androstane steroids. Catalyzes the conversion of dihydrotestosterone to its inactive form 5alpha-androstanediol, that does not bind androgen receptor/AR. Does not function as an isomerase. In Mus musculus (Mouse), this protein is NADPH-dependent 3-keto-steroid reductase Hsd3b5.